Reading from the N-terminus, the 200-residue chain is Thymidylate kinase (200 aa).

ATP is bound at residue 10–17; the sequence is GIDGAGKS.

The protein belongs to the thymidylate kinase family.

It catalyses the reaction dTMP + ATP = dTDP + ADP. Functionally, phosphorylation of dTMP to form dTDP in both de novo and salvage pathways of dTTP synthesis. The chain is Thymidylate kinase from Cupriavidus metallidurans (strain ATCC 43123 / DSM 2839 / NBRC 102507 / CH34) (Ralstonia metallidurans).